Reading from the N-terminus, the 206-residue chain is Smr domain-containing protein C11H11.03c (206 aa).

The 76-residue stretch at 75-150 (IDLHGLYIDE…NEGRIYVYLP (76 aa)) folds into the Smr domain.

Its subcellular location is the cytoplasm. It localises to the nucleus. This Schizosaccharomyces pombe (strain 972 / ATCC 24843) (Fission yeast) protein is Smr domain-containing protein C11H11.03c.